We begin with the raw amino-acid sequence, 403 residues long: Phosphoglycerate kinase (403 aa).

Substrate is bound by residues Asp-21–Asn-23, Arg-36, His-59–Arg-62, Arg-119, and Arg-154. Residues Lys-207, Gly-299, Glu-330, and Gly-357 to Ala-360 contribute to the ATP site.

This sequence belongs to the phosphoglycerate kinase family. As to quaternary structure, monomer.

It is found in the cytoplasm. The enzyme catalyses (2R)-3-phosphoglycerate + ATP = (2R)-3-phospho-glyceroyl phosphate + ADP. Its pathway is carbohydrate degradation; glycolysis; pyruvate from D-glyceraldehyde 3-phosphate: step 2/5. This chain is Phosphoglycerate kinase, found in Chlamydia trachomatis serovar L2 (strain ATCC VR-902B / DSM 19102 / 434/Bu).